Reading from the N-terminus, the 41-residue chain is Large ribosomal subunit protein bL36 (41 aa).

This sequence belongs to the bacterial ribosomal protein bL36 family.

The polypeptide is Large ribosomal subunit protein bL36 (Rhizobium etli (strain CIAT 652)).